The primary structure comprises 461 residues: UDP-glycosyltransferase 88B1 (461 aa).

UDP-alpha-D-glucose is bound by residues serine 278, 340–341 (WA), 358–366 (HCGWNSSLE), and 380–383 (YAEQ).

Belongs to the UDP-glycosyltransferase family.

Its function is as follows. May glycosylate diterpenes or flavonols in leaves. This chain is UDP-glycosyltransferase 88B1, found in Stevia rebaudiana (Stevia).